The primary structure comprises 333 residues: Fructose-1,6-bisphosphatase class 1 (333 aa).

Mg(2+) contacts are provided by E89, D112, L114, and D115. Substrate is bound by residues 115–118, N208, Y241, and K271; that span reads DGSS. A Mg(2+)-binding site is contributed by E277.

The protein belongs to the FBPase class 1 family. Homotetramer. Mg(2+) is required as a cofactor.

It localises to the cytoplasm. It carries out the reaction beta-D-fructose 1,6-bisphosphate + H2O = beta-D-fructose 6-phosphate + phosphate. The protein operates within carbohydrate biosynthesis; gluconeogenesis. This is Fructose-1,6-bisphosphatase class 1 from Haemophilus influenzae (strain ATCC 51907 / DSM 11121 / KW20 / Rd).